The following is a 710-amino-acid chain: Probable threonine--tRNA ligase 1, cytoplasmic (710 aa).

Residues 1-35 form a disordered region; that stretch reads MSDSQENKPVETPTEVKPVAEKKPAAEKKEKKPAV. Residues 18–33 show a composition bias toward basic and acidic residues; it reads PVAEKKPAAEKKEKKP. The region spanning 72–137 is the TGS domain; that stretch reads KEEPINVTLP…EADCNLQLCK (66 aa).

This sequence belongs to the class-II aminoacyl-tRNA synthetase family.

Its subcellular location is the cytoplasm. It catalyses the reaction tRNA(Thr) + L-threonine + ATP = L-threonyl-tRNA(Thr) + AMP + diphosphate + H(+). The polypeptide is Probable threonine--tRNA ligase 1, cytoplasmic (thrS1) (Dictyostelium discoideum (Social amoeba)).